The chain runs to 378 residues: TelA-like protein SAUSA300_1299 (378 aa).

This sequence belongs to the TelA family.

This is TelA-like protein SAUSA300_1299 from Staphylococcus aureus (strain USA300).